The chain runs to 56 residues: uncharacterized protein (56 aa).

This is an uncharacterized protein from Streptomyces lividans.